We begin with the raw amino-acid sequence, 1170 residues long: Glucose transport transcription regulator RGT1 (1170 aa).

Positions 1 to 22 (MNELNTVSTNSSDSTKDGGTSN) are enriched in polar residues. 2 disordered regions span residues 1 to 47 (MNEL…SRAC) and 77 to 149 (SFDR…SNSV). The zn(2)-C6 fungal-type DNA-binding region spans 47 to 76 (CDQCRKKKIKCDYKDEKGVCSNCQRNGDRC). Basic and acidic residues predominate over residues 99 to 108 (RTNEIQDHNN). The segment covering 113–138 (NTFDNSNNTLNNNTGNSGDNGINSNT) has biased composition (low complexity). A compositionally biased stretch (polar residues) spans 139 to 149 (VPSTPSRSNSV). Phosphoserine occurs at positions 202, 205, 208, and 229. Disordered regions lie at residues 226–254 (VQQSPITNKHTNDSGNANGSVTGSGSASG), 269–288 (APTDDHNGEQTRRSSSIPSL), 293–323 (SNSLLLGGQPQLPPPQQQSQPQAHQQKLQQG), 384–506 (AQQT…HPMT), and 944–977 (NYRPPNPPANNPTVQEGPSAMGSSPVAGNLSAAP). Low complexity predominate over residues 239–250 (SGNANGSVTGSG). Positions 271-280 (TDDHNGEQTR) are enriched in basic and acidic residues. 2 positions are modified to phosphoserine: Ser283 and Ser284. 3 stretches are compositionally biased toward low complexity: residues 293–302 (SNSLLLGGQP), 309–323 (QQSQPQAHQQKLQQG), and 385–397 (QQTQRPQGQQVPQ). Phosphoserine is present on residues Ser410 and Ser414. Over residues 411–422 (APVSVTLSTDRL) the composition is skewed to polar residues. Positions 424 to 444 (GNENNNGEINNNNGSNNSGSS) are enriched in low complexity. Positions 445–457 (KDTSQHSQESVTT) are enriched in polar residues. Positions 473–488 (STKKRRKSYVSKKTKP) are enriched in basic residues. Over residues 493 to 506 (SISITSKDSAHPMT) the composition is skewed to polar residues. Position 1130 is a phosphoserine (Ser1130).

The protein belongs to the EDS1/RGT1 family. Post-translationally, glucose-induced phosphorylation regulates the DNA-binding activity. Hyperphosphorylation in cells growing on high levels of glucose does prevents DNA-binding and dephosphorylation restores DNA-binding ability.

It localises to the nucleus. The protein resides in the cytoplasm. Its function is as follows. Glucose-responsive transcription factor that regulates expression of several glucose transporter (HXT) genes in response to glucose. In the absence of glucose, it functions as a transcriptional repressor, whereas high concentrations of glucose cause it to function as a transcriptional activator. In cells growing on low levels of glucose, has a neutral role, neither repressing nor activating transcription. Binds the consensus binding site sequence 5'-CGGANNA-3', of which multiple copies are present in all HXT promoters regulated by RGT1. This Saccharomyces cerevisiae (strain JAY291) (Baker's yeast) protein is Glucose transport transcription regulator RGT1 (RGT1).